We begin with the raw amino-acid sequence, 1042 residues long: Ubiquitin carboxyl-terminal hydrolase 38 (1042 aa).

The 505-residue stretch at 445–949 folds into the USP domain; that stretch reads TGLINLGNTC…TAYVLLYKKQ (505 aa). Residue cysteine 454 is the Nucleophile of the active site. Histidine 857 serves as the catalytic Proton acceptor.

The protein belongs to the peptidase C19 family. Interacts with isoform 1 of FBXW7; this interaction prevents FBXW7-mediated degradation of MYC.

The protein localises to the cytoplasm. It localises to the nucleus. The catalysed reaction is Thiol-dependent hydrolysis of ester, thioester, amide, peptide and isopeptide bonds formed by the C-terminal Gly of ubiquitin (a 76-residue protein attached to proteins as an intracellular targeting signal).. Deubiquitinating enzyme that plays a role in various cellular processes, including DNA repair, cell cycle regulation, and immune response. Plays a role in the inhibition of type I interferon signaling by mediating the 'Lys-33' to 'Lys-48' ubiquitination transition of TBK1 leading to its degradation. Cleaves the ubiquitin chain from the histone demethylase LSD1/KDM1A and prevents it from degradation by the 26S proteasome, thus maintaining LSD1 protein level in cells. Plays a role in the DNA damage response by regulating the deacetylase activity of HDAC1. Mechanistically, removes the 'Lys-63'-linked ubiquitin chain promoting the deacetylase activity of HDAC1 in response to DNA damage. Also acts as a specific deubiquitinase of histone deacetylase 3/HDAC3 and cleaves its 'Lys-63'-linked ubiquitin chains to lower its histone deacetylase activity. Regulates MYC levels and cell proliferation via antagonizing ubiquitin E3 ligase FBXW7 thereby preventing MYC 'Lys-48'-linked ubiquitination and degradation. Participates in antiviral response by removing both 'Lys-48'-linked and 'Lys-63'-linked polyubiquitination of Zika virus envelope protein E. Constitutively associated with IL-33R/IL1RL1, deconjugates its 'Lys-27'-linked polyubiquitination resulting in its autophagic degradation. The protein is Ubiquitin carboxyl-terminal hydrolase 38 (Usp38) of Mus musculus (Mouse).